We begin with the raw amino-acid sequence, 89 residues long: Submaxillary mucin (89 aa).

A disordered region spans residues 1 to 89 (AGSVGRTAGG…VGGSPVATTL (89 aa)). The O-linked (GalNAc...) serine; partial glycan is linked to Ser3. O-linked (GalNAc...) threonine; partial glycosylation is found at Thr7 and Thr14. An O-linked (GalNAc...) serine; partial glycan is attached at Ser15. O-linked (GalNAc...) threonine; partial glycosylation occurs at Thr23. Ser25 is a glycosylation site (O-linked (GalNAc...) serine; partial). Thr27 is a glycosylation site (O-linked (GalNAc...) threonine; partial). Ser29 carries an O-linked (GalNAc...) serine; partial glycan. A glycan (O-linked (GalNAc...) threonine; partial) is linked at Thr34. A glycan (O-linked (GalNAc...) serine; partial) is linked at Ser38. Residue Thr42 is glycosylated (O-linked (GalNAc...) threonine; partial). 2 O-linked (GalNAc...) serine; partial glycosylation sites follow: Ser47 and Ser49. An O-linked (GalNAc...) threonine; partial glycan is attached at Thr50. Ser54 carries an O-linked (GalNAc...) serine; partial glycan. Residues 56–71 (APGTTLAGRAGTTLGP) show a composition bias toward low complexity. Residues Thr59, Thr60, Thr67, and Thr68 are each glycosylated (O-linked (GalNAc...) threonine; partial). Ser73 and Ser76 each carry an O-linked (GalNAc...) serine; partial glycan. Thr78 carries an O-linked (GalNAc...) threonine; partial glycan. The O-linked (GalNAc...) serine; partial glycan is linked to Ser83.

Heavily O-glycosylated at most but not all Ser and Thr residues. Expressed in the submaxillary salivary gland.

It localises to the secreted. This chain is Submaxillary mucin, found in Canis lupus familiaris (Dog).